The sequence spans 254 residues: uncharacterized protein (254 aa).

The tract at residues 60 to 161 (PKSPTTTSIS…PEIPQAAPGT (102 aa)) is disordered. Composition is skewed to low complexity over residues 63–77 (PTTT…STTP) and 89–146 (TPIP…TTTS).

This is an uncharacterized protein from Caenorhabditis elegans.